Here is a 333-residue protein sequence, read N- to C-terminus: Probable tRNA pseudouridine synthase B (333 aa).

D66 functions as the Nucleophile in the catalytic mechanism. The PUA domain maps to 233-308 (LKKIIIKDSA…EVVEITRVIM (76 aa)).

It belongs to the pseudouridine synthase TruB family. Type 2 subfamily.

It catalyses the reaction uridine(55) in tRNA = pseudouridine(55) in tRNA. Its function is as follows. Could be responsible for synthesis of pseudouridine from uracil-55 in the psi GC loop of transfer RNAs. The sequence is that of Probable tRNA pseudouridine synthase B from Methanococcus maripaludis (strain DSM 14266 / JCM 13030 / NBRC 101832 / S2 / LL).